The chain runs to 618 residues: Structural protein ORF618 (618 aa).

Positions 570 to 598 (ILEAKRQIEDRAKGLSKNLDNTVTEIMNA) form a coiled coil.

The protein resides in the virion. In Acidianus two-tailed virus (ATV), this protein is Structural protein ORF618.